The sequence spans 516 residues: uncharacterized protein (516 aa).

In terms of domain architecture, uDENN spans Ala-31–Phe-185. One can recognise a cDENN domain in the interval His-211–Gly-365. In terms of domain architecture, dDENN spans Leu-367–Gly-513. 2 S-palmitoyl cysteine lipidation sites follow: Cys-511 and Cys-516.

Post-translationally, palmitoylated by AKR1.

The protein resides in the lipid droplet. In terms of biological role, may be involved in lipid metabolism. This is an uncharacterized protein from Saccharomyces cerevisiae (strain ATCC 204508 / S288c) (Baker's yeast).